A 762-amino-acid chain; its full sequence is 5-methyltetrahydropteroyltriglutamate--homocysteine methyltransferase (762 aa).

Residues 17 to 20 and Lys111 each bind 5-methyltetrahydropteroyltri-L-glutamate; that span reads REWK. L-homocysteine is bound by residues 435 to 437 and Glu488; that span reads IGS. Residues 435 to 437 and Glu488 contribute to the L-methionine site; that span reads IGS. 5-methyltetrahydropteroyltri-L-glutamate-binding positions include 519–520 and Trp565; that span reads RC. An L-homocysteine-binding site is contributed by Asp603. Residue Asp603 participates in L-methionine binding. Glu609 provides a ligand contact to 5-methyltetrahydropteroyltri-L-glutamate. Residues His645, Cys647, and Glu669 each coordinate Zn(2+). His698 (proton donor) is an active-site residue. Zn(2+) is bound at residue Cys730.

Belongs to the vitamin-B12 independent methionine synthase family. Requires Zn(2+) as cofactor.

The enzyme catalyses 5-methyltetrahydropteroyltri-L-glutamate + L-homocysteine = tetrahydropteroyltri-L-glutamate + L-methionine. Its pathway is amino-acid biosynthesis; L-methionine biosynthesis via de novo pathway; L-methionine from L-homocysteine (MetE route): step 1/1. In terms of biological role, catalyzes the transfer of a methyl group from 5-methyltetrahydrofolate to homocysteine resulting in methionine formation. The polypeptide is 5-methyltetrahydropteroyltriglutamate--homocysteine methyltransferase (Bacillus cereus (strain ZK / E33L)).